The sequence spans 303 residues: Probable 5-dehydro-4-deoxyglucarate dehydratase (303 aa).

This sequence belongs to the DapA family.

It catalyses the reaction 5-dehydro-4-deoxy-D-glucarate + H(+) = 2,5-dioxopentanoate + CO2 + H2O. The protein operates within carbohydrate acid metabolism; D-glucarate degradation; 2,5-dioxopentanoate from D-glucarate: step 2/2. This chain is Probable 5-dehydro-4-deoxyglucarate dehydratase, found in Acidovorax ebreus (strain TPSY) (Diaphorobacter sp. (strain TPSY)).